The chain runs to 1311 residues: Suppressor of presenilin protein 4 (1311 aa).

The span at 1–11 (MSSEPTSSIES) shows a compositional bias: polar residues. Disordered regions lie at residues 1–58 (MSSE…DDLN) and 75–95 (MFED…STAH). C2H2-type zinc fingers lie at residues 112–134 (HACH…TKMH) and 141–163 (FACE…NNIH). A disordered region spans residues 226-304 (EFDTTPPPIL…PPPVRKDVEK (79 aa)). Residues 280–293 (SPKGSLPSSSASSV) show a composition bias toward low complexity. 4 consecutive C2H2-type zinc fingers follow at residues 327–349 (QRCP…SGGH), 355–379 (YICP…YILH), 451–476 (KKCN…VKTH), and 487–510 (FLCL…LIEH). The segment at 544–563 (VKEEPKEADGDESGDESFDS) is disordered. The span at 552 to 561 (DGDESGDESF) shows a compositional bias: acidic residues. 6 consecutive C2H2-type zinc fingers follow at residues 585–607 (FCCN…YDKH), 613–635 (FKCQ…EKLH), 709–731 (FQCT…KKRH), 737–759 (YRCV…LKQH), 794–816 (YCCD…HRNH), and 823–845 (NICS…TIIH). Residues 865-1002 (RPVSSLTDLN…ESPEPDESVE (138 aa)) are disordered. Residues 874 to 897 (NSEKMNERKSTKRKMLDKVEKMEV) are compositionally biased toward basic and acidic residues. Residues 898-907 (GEDEEDDEES) show a composition bias toward acidic residues. Basic and acidic residues predominate over residues 908–920 (VDKGTDDGDYKQR). Over residues 956-979 (NRINYSLLSKNGSGKPTPSTSSAN) the composition is skewed to polar residues. 6 C2H2-type zinc fingers span residues 1022 to 1044 (LKCP…RYYH), 1053 to 1075 (YACS…LKLH), 1104 to 1126 (YYCK…SAYH), 1162 to 1184 (KYCK…LDRH), 1190 to 1212 (YKCY…QLNH), and 1261 to 1284 (LKCP…SVHH).

In terms of tissue distribution, expressed in neurons.

It is found in the nucleus. Its function is as follows. Probable transcriptional regulator, which participates in the transcriptional repression of the presenilin protein hop-1. Might play a role in the oxidative stress response. This Caenorhabditis elegans protein is Suppressor of presenilin protein 4 (spr-4).